Consider the following 316-residue polypeptide: Beta-ketoacyl-[acyl-carrier-protein] synthase III (316 aa).

Residues C112 and H243 contribute to the active site. Positions 244–248 (QANLR) are ACP-binding. The active site involves N273.

This sequence belongs to the thiolase-like superfamily. FabH family. As to quaternary structure, homodimer.

It is found in the cytoplasm. It carries out the reaction malonyl-[ACP] + acetyl-CoA + H(+) = 3-oxobutanoyl-[ACP] + CO2 + CoA. It functions in the pathway lipid metabolism; fatty acid biosynthesis. Its function is as follows. Catalyzes the condensation reaction of fatty acid synthesis by the addition to an acyl acceptor of two carbons from malonyl-ACP. Catalyzes the first condensation reaction which initiates fatty acid synthesis and may therefore play a role in governing the total rate of fatty acid production. Possesses both acetoacetyl-ACP synthase and acetyl transacylase activities. Its substrate specificity determines the biosynthesis of branched-chain and/or straight-chain of fatty acids. The chain is Beta-ketoacyl-[acyl-carrier-protein] synthase III from Yersinia pseudotuberculosis serotype O:1b (strain IP 31758).